Here is a 428-residue protein sequence, read N- to C-terminus: Glutamate-1-semialdehyde 2,1-aminomutase 1 (428 aa).

An N6-(pyridoxal phosphate)lysine modification is found at K267.

It belongs to the class-III pyridoxal-phosphate-dependent aminotransferase family. HemL subfamily. Homodimer. Pyridoxal 5'-phosphate serves as cofactor.

The protein resides in the cytoplasm. The catalysed reaction is (S)-4-amino-5-oxopentanoate = 5-aminolevulinate. It participates in porphyrin-containing compound metabolism; protoporphyrin-IX biosynthesis; 5-aminolevulinate from L-glutamyl-tRNA(Glu): step 2/2. The polypeptide is Glutamate-1-semialdehyde 2,1-aminomutase 1 (Staphylococcus aureus (strain Mu3 / ATCC 700698)).